Reading from the N-terminus, the 318-residue chain is MTAPHTAPARVAVLGGTGFIGRVLGARLLAQGAEVLSLARKAPAEPAPGRFVAFDLSNGDPAELTALLDRERIDTVVNAAGGMWGLNDEQMYQANVVLTERLIEAVAAMASPARLVHLGTVHEYGMAPVGTSQRESDPAAPVMEYGKLKLAATEAVVRAVEAGRISGVVLRLGNVVGAGQPGHSLLGVMAAKLDAARAAGETAQLSLQPLTALRDFVDLTDTLDAVLLAAADRSAPPVVNVGTGSASTARHLVELLIEESGVPTEITEVPAPDGTGPETEWQQLDVTVARDSLGWTPRRTLREAVRELWTAQSTAPVA.

Residues 19 to 20 (FI), 60 to 61 (DP), asparagine 95, threonine 120, tyrosine 145, and lysine 149 each bind NAD(+). Threonine 120 and tyrosine 145 together coordinate substrate. Tyrosine 145 acts as the Proton acceptor in catalysis.

It belongs to the NAD(P)-dependent epimerase/dehydratase family.

The catalysed reaction is dTDP-6-deoxy-beta-L-talose + NAD(+) = dTDP-4-dehydro-beta-L-rhamnose + NADH + H(+). It carries out the reaction dTDP-6-deoxy-beta-L-talose + NADP(+) = dTDP-4-dehydro-beta-L-rhamnose + NADPH + H(+). Functionally, catalyzes the reduction of dTDP-6-deoxy-L-lyxo-4-hexulose to dTDP-6-deoxy-L-talose. Can use NAD(+) or NADP(+). This Kitasatospora kifunensis (Streptomyces kifunensis) protein is dTDP-6-deoxy-L-talose 4-dehydrogenase (NAD(P)(+)) (tal).